A 122-amino-acid chain; its full sequence is Holo-[acyl-carrier-protein] synthase (122 aa).

2 residues coordinate Mg(2+): Asp-8 and Glu-57.

It belongs to the P-Pant transferase superfamily. AcpS family. The cofactor is Mg(2+).

It is found in the cytoplasm. The catalysed reaction is apo-[ACP] + CoA = holo-[ACP] + adenosine 3',5'-bisphosphate + H(+). Transfers the 4'-phosphopantetheine moiety from coenzyme A to a Ser of acyl-carrier-protein. This chain is Holo-[acyl-carrier-protein] synthase, found in Protochlamydia amoebophila (strain UWE25).